The primary structure comprises 1476 residues: Cystic fibrosis transmembrane conductance regulator (1476 aa).

Over methionine 1–phenylalanine 77 the chain is Cytoplasmic. A helical transmembrane segment spans residues valine 78–glutamine 98. One can recognise an ABC transmembrane type-1 1 domain in the interval phenylalanine 81–leucine 365. Over proline 99–tyrosine 122 the chain is Extracellular. A helical transmembrane segment spans residues leucine 123 to histidine 146. Residues histidine 147–leucine 195 lie on the Cytoplasmic side of the membrane. A helical membrane pass occupies residues alanine 196–tryptophan 216. Topologically, residues aspartate 217 to serine 222 are extracellular. Residues alanine 223–methionine 243 traverse the membrane as a helical segment. Residues methionine 244 to arginine 298 lie on the Cytoplasmic side of the membrane. The helical transmembrane segment at serine 299–phenylalanine 319 threads the bilayer. The Extracellular portion of the chain corresponds to leucine 320–threonine 339. Residues isoleucine 340–valine 358 traverse the membrane as a helical segment. The Cytoplasmic portion of the chain corresponds to glutamine 359–glycine 853. Residues tryptophan 401, glycine 458–threonine 465, and glutamine 493 contribute to the ATP site. Positions valine 412–glycine 646 constitute an ABC transporter 1 domain. A lipid anchor (S-palmitoyl cysteine) is attached at cysteine 524. Residues serine 549 and serine 660 each carry the phosphoserine modification. The interval threonine 654–glutamate 826 is disordered R region. Serine 670 bears the Phosphoserine; by PKA mark. A phosphoserine mark is found at serine 684, serine 698, and serine 710. Threonine 715 carries the post-translational modification Phosphothreonine. Serine 732, serine 763, serine 785, serine 790, and serine 808 each carry phosphoserine. A helical transmembrane segment spans residues leucine 854–phenylalanine 874. The 300-residue stretch at leucine 854–arginine 1153 folds into the ABC transmembrane type-1 2 domain. At valine 875 to isoleucine 913 the chain is on the extracellular side. Asparagine 889 and asparagine 895 each carry an N-linked (GlcNAc...) asparagine glycan. A discontinuously helical membrane pass occupies residues tyrosine 914 to histidine 934. At threonine 935 to threonine 985 the chain is on the cytoplasmic side. The chain crosses the membrane as a helical span at residues isoleucine 986–leucine 1006. The Extracellular portion of the chain corresponds to glutamine 1007 to proline 1008. Residues tyrosine 1009–leucine 1029 traverse the membrane as a helical segment. Residues histidine 1030 to threonine 1090 lie on the Cytoplasmic side of the membrane. Residues leucine 1091–phenylalanine 1111 traverse the membrane as a helical segment. The Extracellular portion of the chain corresponds to isoleucine 1112 to glycine 1125. Residues isoleucine 1126–isoleucine 1146 traverse the membrane as a helical segment. Over aspartate 1147–leucine 1476 the chain is Cytoplasmic. The ABC transporter 2 domain maps to valine 1208–serine 1439. Residues tyrosine 1215 and glycine 1240–serine 1247 contribute to the ATP site. Positions arginine 1382 to leucine 1476 are interaction with GORASP2. A lipid anchor (S-palmitoyl cysteine) is attached at cysteine 1391. Phosphoserine is present on residues serine 1440 and serine 1452. Over residues leucine 1445 to proline 1456 the composition is skewed to basic residues. Residues leucine 1445–leucine 1476 are disordered. Acidic residues predominate over residues glutamate 1466–leucine 1476. Residues threonine 1474 to leucine 1476 carry the PDZ-binding motif.

The protein belongs to the ABC transporter superfamily. ABCC family. CFTR transporter (TC 3.A.1.202) subfamily. In terms of assembly, monomer; does not require oligomerization for channel activity. May form oligomers in the membrane. Interacts with SLC4A7 through NHERF1. Interacts with SHANK2. Interacts with NHERF1 and MYO6. Interacts (via C-terminus) with GOPC (via PDZ domain); this promotes CFTR internalization and thereby decreases channel activity. Interacts with SLC4A7 through NHERF1. Found in a complex with MYO5B and RAB11A. Interacts with ANO1. Interacts with SLC26A8. Interacts with AHCYL1; the interaction increases CFTR activity. Interacts with CSE1L. The core-glycosylated form interacts with GORASP2 (via PDZ GRASP-type 1 domain) in respone to ER stress. Interacts with MARCHF2; the interaction leads to CFTR ubiqtuitination and degradation. Interacts with ADGRG2. N-glycosylated. Post-translationally, phosphorylated; cAMP treatment promotes phosphorylation and activates the channel. Dephosphorylation decreases the ATPase activity (in vitro). Phosphorylation at PKA sites activates the channel. Phosphorylation at PKC sites enhances the response to phosphorylation by PKA. Phosphorylated by AMPK; this inhibits channel activity. In terms of processing, ubiquitinated, leading to its degradation in the lysosome. Deubiquitination by USP10 in early endosomes enhances its endocytic recycling to the cell membrane. Ubiquitinated by RNF185 during ER stress. Ubiquitinated by MARCHF2. As to expression, detected in epithelial cells in nasopharynx, submandibular gland, pancreas and ileum (at protein level). Expressed in the epididymis. In the caput section of the epididymis, expressed uniformly on both the luminal and basolateral sides of the ducts and on sperm in the caput lumen (at protein level). In the cauda, detected along the luminal border but not continuously and is also expressed on the basolateral surface. Within the caudal lumen, detected on sperm.

It is found in the apical cell membrane. The protein localises to the early endosome membrane. Its subcellular location is the cell membrane. The protein resides in the recycling endosome membrane. It localises to the endoplasmic reticulum membrane. It is found in the nucleus. It catalyses the reaction ATP + H2O + closed Cl(-) channel = ADP + phosphate + open Cl(-) channel.. The enzyme catalyses chloride(in) = chloride(out). The catalysed reaction is hydrogencarbonate(in) = hydrogencarbonate(out). It carries out the reaction ATP + H2O = ADP + phosphate + H(+). Epithelial ion channel that plays an important role in the regulation of epithelial ion and water transport and fluid homeostasis. Mediates the transport of chloride ions across the cell membrane. Possesses an intrinsic ATPase activity and utilizes ATP to gate its channel; the passive flow of anions through the channel is gated by cycles of ATP binding and hydrolysis by the ATP-binding domains. The ion channel is also permeable to HCO(3)(-); selectivity depends on the extracellular chloride concentration. Exerts its function also by modulating the activity of other ion channels and transporters. Contributes to the regulation of the pH and the ion content of the epithelial fluid layer. Modulates the activity of the epithelial sodium channel (ENaC) complex, in part by regulating the cell surface expression of the ENaC complex. May regulate bicarbonate secretion and salvage in epithelial cells by regulating the transporter SLC4A7. Can inhibit the chloride channel activity of ANO1. Plays a role in the chloride and bicarbonate homeostasis during sperm epididymal maturation and capacitation. The polypeptide is Cystic fibrosis transmembrane conductance regulator (Rattus norvegicus (Rat)).